The primary structure comprises 491 residues: Ribulose-1,5 bisphosphate carboxylase/oxygenase large subunit N-methyltransferase, chloroplastic (491 aa).

The SET domain maps to 67 to 291 (EGVVTTKTPV…AGDQLFIQYD (225 aa)).

Belongs to the class V-like SAM-binding methyltransferase superfamily. Plant protein-lysine LSMT methyltransferase family.

It is found in the plastid. Its subcellular location is the chloroplast. It carries out the reaction L-lysyl-[ribulose-1,5-bisphosphate carboxylase] + 3 S-adenosyl-L-methionine = N(6),N(6),N(6)-trimethyl-L-lysyl-[ribulose-1,5-bisphosphate carboxylase] + 3 S-adenosyl-L-homocysteine + 3 H(+). Methylates 'Lys-14' of the large subunit of RuBisCO. The polypeptide is Ribulose-1,5 bisphosphate carboxylase/oxygenase large subunit N-methyltransferase, chloroplastic (RBCMT) (Nicotiana tabacum (Common tobacco)).